Consider the following 737-residue polypeptide: Prospero homeobox protein 1 (737 aa).

An interaction with RORG region spans residues 1-28 (MPDHDSTALLSRQTKRRRVDIGVKRTVG). The segment covering 103–135 (KNGGTEPSFQASGLSSTGSEVHQEDICSNSSRD) has biased composition (polar residues). The interval 103–147 (KNGGTEPSFQASGLSSTGSEVHQEDICSNSSRDSPPECLSPFGRP) is disordered. A phosphoserine mark is found at Ser177, Ser179, Ser199, Ser291, and Ser295. A disordered region spans residues 178–221 (HSPSVALRGNENEREMAPQSVSPRESYRENKRKQKLPQQQQQSF). Basic and acidic residues predominate over residues 320-337 (MAENKPKREGSNKERDHG). 2 disordered regions span residues 320 to 344 (MAEN…LQPE) and 444 to 476 (RKNS…AGFT). Residue Lys324 forms a Glycyl lysine isopeptide (Lys-Gly) (interchain with G-Cter in SUMO2) linkage. Over residues 464–476 (LHQSPLSATAGFT) the composition is skewed to polar residues. Residues Ser511 and Ser514 each carry the phosphoserine modification. Residues 525–547 (RTKMSSHHLSHHPCSPAHPPSTA) form a disordered region. At Ser557 the chain carries Phosphoserine. The region spanning 577 to 635 (QEGLSPNHLKKAKLMFFYTRYPSSNMLKTYFSDVKFNRCITSQLIKWFSNFREFYYIQM) is the Prospero-type homeo domain. The tract at residues 577 to 735 (QEGLSPNHLK…KSPNCLQELL (159 aa)) is homeo-Prospero. In terms of domain architecture, Prospero spans 636 to 735 (EKYARQAIND…KSPNCLQELL (100 aa)). An essential for nuclear localization, interaction with RORG, repression of RORG transcriptional activator activity region spans residues 723–729 (EIFKSPN).

It belongs to the Prospero homeodomain family. Interacts with RORA and RORG (via AF-2 motif). Expressed in the young neurons of the subventricular region of the CNS, developing eye lens and pancreas. It is also found in the developing liver, heart and skeletal muscle. In the eye, expressed in the lens and retina at postnatal day 10. In the retina, localized to the inner nuclear layer. In the lens, localized to epithelial and fiber cells.

It is found in the nucleus. In terms of biological role, transcription factor involved in developmental processes such as cell fate determination, gene transcriptional regulation and progenitor cell regulation in a number of organs. Plays a critical role in embryonic development and functions as a key regulatory protein in neurogenesis and the development of the heart, eye lens, liver, pancreas and the lymphatic system. Involved in the regulation of the circadian rhythm. Represses: transcription of the retinoid-related orphan receptor RORG, transcriptional activator activity of RORA and RORG and the expression of RORA/G-target genes including core clock components: BMAL1, NPAS2 and CRY1 and metabolic genes: AVPR1A and ELOVL3. This Mus musculus (Mouse) protein is Prospero homeobox protein 1 (Prox1).